The following is a 138-amino-acid chain: Putative pre-16S rRNA nuclease (138 aa).

This sequence belongs to the YqgF nuclease family.

It is found in the cytoplasm. In terms of biological role, could be a nuclease involved in processing of the 5'-end of pre-16S rRNA. This chain is Putative pre-16S rRNA nuclease, found in Escherichia coli O157:H7.